Reading from the N-terminus, the 342-residue chain is MPQEIVFCKGGGCTAKLGPDLLSHVLAKLPRGEKDSNLLIGYDSCDDAAVYKISDDTAVVQTLDFFPPMVDDPYTFGQIAAANALSDIYAMGGTVKTALNIVCFPEKMDLNILGKIMQGGADKVIEAGGTLAGGHSIADSDVKYGLSVMGTVHPEHIYSNNTGQPSDVLILTKKLGVGLVCNANRVGEAPLGAIEDAVSSMTTLNKAASEISHAFDIHACTDVTGFSFLGHLSEMLNDDITALIDSISIPVITGALRCADEFFLTAAAQRNRNHVGDKVCFAKNIPFSMEEVLFDPQTSGGLLFAVKASEADAFLHELKAAGLPAAKVGRFVKRRDVPIYVN.

Residue C13 is part of the active site. ATP contacts are provided by residues K16 and 44–46; that span reads SCD. D47 is a binding site for Mg(2+). Residues D64, D87, and 134-136 contribute to the ATP site; that span reads GHS. D87 contributes to the Mg(2+) binding site. D222 serves as a coordination point for Mg(2+).

This sequence belongs to the selenophosphate synthase 1 family. Class I subfamily. In terms of assembly, homodimer. Mg(2+) is required as a cofactor.

The catalysed reaction is hydrogenselenide + ATP + H2O = selenophosphate + AMP + phosphate + 2 H(+). Functionally, synthesizes selenophosphate from selenide and ATP. The protein is Selenide, water dikinase of Agathobacter rectalis (strain ATCC 33656 / DSM 3377 / JCM 17463 / KCTC 5835 / VPI 0990) (Eubacterium rectale).